We begin with the raw amino-acid sequence, 192 residues long: Elongation factor P (192 aa).

This sequence belongs to the elongation factor P family.

It is found in the cytoplasm. The protein operates within protein biosynthesis; polypeptide chain elongation. Its function is as follows. Involved in peptide bond synthesis. Stimulates efficient translation and peptide-bond synthesis on native or reconstituted 70S ribosomes in vitro. Probably functions indirectly by altering the affinity of the ribosome for aminoacyl-tRNA, thus increasing their reactivity as acceptors for peptidyl transferase. The chain is Elongation factor P from Borrelia turicatae (strain 91E135).